A 268-amino-acid polypeptide reads, in one-letter code: UDP-2,3-diacylglucosamine hydrolase (268 aa).

Positions 25, 27, 58, 97, and 132 each coordinate Mn(2+). Residue 97-98 (NR) participates in substrate binding. Residues Asp-140, Ser-178, Glu-191, and His-222 each contribute to the substrate site. Mn(2+)-binding residues include His-222 and His-224.

Belongs to the LpxH family. The cofactor is Mn(2+).

It localises to the cell inner membrane. It catalyses the reaction UDP-2-N,3-O-bis[(3R)-3-hydroxytetradecanoyl]-alpha-D-glucosamine + H2O = 2-N,3-O-bis[(3R)-3-hydroxytetradecanoyl]-alpha-D-glucosaminyl 1-phosphate + UMP + 2 H(+). It participates in glycolipid biosynthesis; lipid IV(A) biosynthesis; lipid IV(A) from (3R)-3-hydroxytetradecanoyl-[acyl-carrier-protein] and UDP-N-acetyl-alpha-D-glucosamine: step 4/6. Hydrolyzes the pyrophosphate bond of UDP-2,3-diacylglucosamine to yield 2,3-diacylglucosamine 1-phosphate (lipid X) and UMP by catalyzing the attack of water at the alpha-P atom. Involved in the biosynthesis of lipid A, a phosphorylated glycolipid that anchors the lipopolysaccharide to the outer membrane of the cell. This Ralstonia nicotianae (strain ATCC BAA-1114 / GMI1000) (Ralstonia solanacearum) protein is UDP-2,3-diacylglucosamine hydrolase.